A 402-amino-acid polypeptide reads, in one-letter code: MSAEGAEPGPGSGSGPGPGPLCPEHGQALSWFCGSERRPVCAACAGLGGRCRGHRIRRAEERAEELRNKIVDQCERLQLQSAAITKYVADVLPGKNQRAVSMASAARELVIQRLSLVRSLCESEEQRLLEQVHGEEERAHQSILTQRVHWAEALQKLDTIRTGLVGMLTHLDDLQLIQKEQEIFERTEEAEGILDPQESEMLNFNEKCTRSPLLTQLWATAVLGSLSGTEDIRIDERTVSPFLQLSDDRKTLTFSTKKSKACADGPERFDHWPNALAATSFQNGLHAWMVNVQNSCAYKVGVASGHLPRKGSGSDCRLGHNAFSWVFSRYDQEFRFSHNGQHEPLGLLRGPAQLGVVLDLQVQELLFYEPASGTVLCAHHVSFPGPLFPVFAVADQTISIVR.

Positions 1–20 (MSAEGAEPGPGSGSGPGPGP) are disordered. Residues 17-65 (GPGPLCPEHGQALSWFCGSERRPVCAACAGLGGRCRGHRIRRAEERAEE) form a B box-type zinc finger. The B30.2/SPRY domain occupies 212–402 (PLLTQLWATA…VADQTISIVR (191 aa)).

In terms of assembly, interacts with TRPV5 and TRPV6. Interacts with YWHAZ/14-3-3 protein zeta.

The protein localises to the cytoplasm. It is found in the membrane. May regulate epithelial calcium transport by inhibiting TRPV5 activity. This chain is B box and SPRY domain-containing protein (BSPRY), found in Homo sapiens (Human).